A 432-amino-acid chain; its full sequence is Amino-acid acetyltransferase (432 aa).

In terms of domain architecture, N-acetyltransferase spans 286 to 425 (ELVREAAIED…ASLYNFQRNS (140 aa)).

Belongs to the acetyltransferase family. ArgA subfamily.

The protein resides in the cytoplasm. It catalyses the reaction L-glutamate + acetyl-CoA = N-acetyl-L-glutamate + CoA + H(+). Its pathway is amino-acid biosynthesis; L-arginine biosynthesis; N(2)-acetyl-L-ornithine from L-glutamate: step 1/4. The polypeptide is Amino-acid acetyltransferase (Pseudomonas syringae pv. tomato (strain ATCC BAA-871 / DC3000)).